We begin with the raw amino-acid sequence, 315 residues long: MTGQGHSASGSSAWSTVFRHVRYENLVAGVSGGVLSNLALHPLDLVKIRFAVSDGLELRPKYNGILHCLTTIWKLDGLRGLYQGVTPNVWGAGLSWGLYFFFYNAIKSYKTEGRAERLEATEYLVSAAEAGAMTLCITNPLWVTKTRLMLQYDAVINSPHRQYKGMFDTLVKIYKYEGVRGLYKGFVPGLFGTSHGALQFMAYELLKLKYNQHINRLPEAQLSTVEYISVAALSKIFAVAATYPYQVVRARLQDQHMFYSGVIDVITKTWRKEGIGGFYKGIAPNLIRVTPACCITFVVYENVSHFLLDLREKRK.

Solcar repeat units lie at residues 20-109 (HVRY…IKSY), 118-209 (LEAT…LKLK), and 222-306 (LSTV…VSHF). Helical transmembrane passes span 26–43 (LVAG…LHPL), 89–106 (VWGA…YNAI), 123–143 (YLVS…PLWV), 186–203 (FVPG…FMAY), 227–243 (YISV…AATY), and 281–300 (GIAP…FVVY).

The protein belongs to the mitochondrial carrier (TC 2.A.29) family.

It is found in the mitochondrion inner membrane. It carries out the reaction FAD(in) = FAD(out). Its function is as follows. Facilitates flavin adenine dinucleotide (FAD) translocation across the mitochondrial inner membrane into the mitochondrial matrix where it acts as a redox cofactor to assist flavoenzyme activities in fundamental metabolic processes including fatty acid beta-oxidation, amino acid and choline metabolism as well as mitochondrial electron transportation. In particular, provides FAD to DLD dehydrogenase of the glycine cleavage system, part of mitochondrial one-carbon metabolic pathway involved in neural tube closure in early embryogenesis. This is Solute carrier family 25 member 32 from Macaca fascicularis (Crab-eating macaque).